The primary structure comprises 757 residues: MILYIVLPFYVRTKPYSILPSYSSLQWITNAWCSLPSIYILCHCSKHQEEITILALKPLIAMNNSEEWPLKHVQPPKLSFRHLLSRSVTDAPSLRVRWFYAVDRPLRKSRTGPTEIKKAKNFLPFSAEDSEHIEKSYLKAVENDGQSEPVNVNEDYLYSVNVVSRELSPIYWDGPVYRILRGTWFFSRGDKLYPCEENLATQVEEGYLNSCPYREFSNEKDSAAAQSKTWALLGRYTGGFVQYTGSRNARLVYDDFYRNVSVKIMNRFSPASFHRSDKLVRGYELDMLESNSKPSTPVPTEELTSTTLLNDSSDPSDNFTPSNTESTIDLPSATDASHLMSRPDREVNHLILCCHGIGQKMGERVETVSFVKDISNFRKTLKKTFNSSPDLQAVYPKLKGGGNGVQCLPLLWRQDIRFGMARDLDSSFADDDDDDDESLNMSRDLALDDLEDDSIPTLDNINIPTVTGLRNIISDVLLDVLLYCQPNYRDKILAAVVKRLNRLYNLYKKNVPSFNGHVSLLGHSLGALILFDIIRYQGNIKYSKLQLDFPVANFFALGSPLGLFQMLNGKKIAGPIPKTNLTRSLSYSEQSFDSGVSILSCQNFYNIFHPTDPISYRVEPLVVKQMARLKPQKISHFRPHQDLSSSGVGHKIAGGALNVLSGLRSGIANTLILKSLSYASVFNEATADSHDESQGAENIRDWHIDERMYRLNKTGRIDFMLQEGALDTSYSYVSAMNAHSEYWKNVDLAHFILTQLL.

Residues 1 to 13 (MILYIVLPFYVRT) constitute a mitochondrion transit peptide. A disordered region spans residues 289–330 (ESNSKPSTPVPTEELTSTTLLNDSSDPSDNFTPSNTESTIDL). Over residues 302–329 (ELTSTTLLNDSSDPSDNFTPSNTESTID) the composition is skewed to polar residues. The active site involves S524. The 211-residue stretch at 547 to 757 (LDFPVANFFA…LAHFILTQLL (211 aa)) folds into the DDHD domain.

Belongs to the PA-PLA1 family.

It is found in the mitochondrion. Functionally, probable phospholipase that hydrolyzes phosphatidic acid. The chain is Probable phospholipase C20G8.02, mitochondrial from Schizosaccharomyces pombe (strain 972 / ATCC 24843) (Fission yeast).